A 181-amino-acid chain; its full sequence is Ninjurin-B (181 aa).

Basic and acidic residues predominate over residues 1 to 10 (MDSGEVKISL). Residues 1-72 (MDSGEVKISL…SNKKCSSDLS (72 aa)) form a disordered region. The Extracellular segment spans residues 1–115 (MDSGEVKISL…YNDKASTYIY (115 aa)). Polar residues predominate over residues 12–26 (DSPSSGESFASTTSG). Residues 33 to 49 (RDLDIQVHESHIKDDQF) are compositionally biased toward basic and acidic residues. The interval 80–91 (NKNVAEGLMDIA) is helix alpha1. Positions 94–110 (SANANQLRFLITYNDKA) are helix alpha2. Residues 116–136 (SMIMVILSLVLQLLVGIMLIF) traverse the membrane as a helical segment. Topologically, residues 137 to 153 (KRRLKRFRNRSYERTND) are cytoplasmic. A helical membrane pass occupies residues 154-174 (LLVMGVFMITVINILLAAFTT). Residues 175 to 181 (TDGGGSH) are Extracellular-facing.

Belongs to the ninjurin family.

It localises to the membrane. Effector of non-apoptotic necrotic cell death that mediates plasma membrane rupture (cytolysis): oligomerizes in response to death stimuli and promotes plasma membrane rupture by introducing hydrophilic faces of 2 alpha helices into the hydrophobic membrane, leading to release intracellular molecules that propagate the inflammatory response. Also acts as a homophilic transmembrane adhesion molecule that promotes cell adhesion by mediating homophilic interactions via its extracellular region. The sequence is that of Ninjurin-B from Drosophila melanogaster (Fruit fly).